The sequence spans 149 residues: Small ribosomal subunit protein uS13 (149 aa).

Belongs to the universal ribosomal protein uS13 family. As to quaternary structure, part of the 30S ribosomal subunit. Forms a loose heterodimer with protein S19. Forms two bridges to the 50S subunit in the 70S ribosome.

Its function is as follows. Located at the top of the head of the 30S subunit, it contacts several helices of the 16S rRNA. In the 70S ribosome it contacts the 23S rRNA (bridge B1a) and protein L5 of the 50S subunit (bridge B1b), connecting the 2 subunits; these bridges are implicated in subunit movement. The sequence is that of Small ribosomal subunit protein uS13 from Thermococcus kodakarensis (strain ATCC BAA-918 / JCM 12380 / KOD1) (Pyrococcus kodakaraensis (strain KOD1)).